The following is a 573-amino-acid chain: Phosphomethylpyrimidine synthase (573 aa).

Substrate contacts are provided by residues asparagine 190, methionine 219, tyrosine 248, histidine 284, 304–306 (SRG), 345–348 (DGLR), and glutamate 384. Position 388 (histidine 388) interacts with Zn(2+). Tyrosine 411 serves as a coordination point for substrate. Histidine 452 contacts Zn(2+). [4Fe-4S] cluster-binding residues include cysteine 532, cysteine 535, and cysteine 540.

The protein belongs to the ThiC family. [4Fe-4S] cluster serves as cofactor.

It carries out the reaction 5-amino-1-(5-phospho-beta-D-ribosyl)imidazole + S-adenosyl-L-methionine = 4-amino-2-methyl-5-(phosphooxymethyl)pyrimidine + CO + 5'-deoxyadenosine + formate + L-methionine + 3 H(+). The protein operates within cofactor biosynthesis; thiamine diphosphate biosynthesis. Functionally, catalyzes the synthesis of the hydroxymethylpyrimidine phosphate (HMP-P) moiety of thiamine from aminoimidazole ribotide (AIR) in a radical S-adenosyl-L-methionine (SAM)-dependent reaction. The sequence is that of Phosphomethylpyrimidine synthase from Geobacillus sp. (strain WCH70).